Here is a 154-residue protein sequence, read N- to C-terminus: Putative nickel-responsive regulator (154 aa).

Ni(2+)-binding residues include His95, His106, His108, and Cys114.

This sequence belongs to the transcriptional regulatory CopG/NikR family. Ni(2+) is required as a cofactor.

Its function is as follows. Transcriptional regulator. The polypeptide is Putative nickel-responsive regulator (Caldanaerobacter subterraneus subsp. tengcongensis (strain DSM 15242 / JCM 11007 / NBRC 100824 / MB4) (Thermoanaerobacter tengcongensis)).